A 447-amino-acid polypeptide reads, in one-letter code: Serine/threonine-protein phosphatase 2A 55 kDa regulatory subunit B gamma isoform (447 aa).

WD repeat units lie at residues 22–61 (TEADVISTVEFNHTGELLATGDKGGRVVIFQREPESKNAP), 87–128 (EIEE…KRPE), 171–209 (GHTYHINSISVNSDCETYMSADDLRINLWHLAITDRSFN), 220–260 (DLTE…LCDK), 279–317 (EIISSVSDVKFSHSGRYMLTRDYLTVKVWDLNMEARPIE), 334–375 (ESDC…DVTL), and 410–446 (DFTKKILHTAWHPAENIIAIAATNNLYIFQDKVNSDM).

The protein belongs to the phosphatase 2A regulatory subunit B family. In terms of assembly, PP2A consists of a common heterodimeric core enzyme, composed of a 36 kDa catalytic subunit (subunit C) and a 65 kDa constant regulatory subunit (PR65 or subunit A), that associates with a variety of regulatory subunits. Proteins that associate with the core dimer include three families of regulatory subunits B (the R2/B/PR55/B55, R3/B''/PR72/PR130/PR59 and R5/B'/B56 families), the 48 kDa variable regulatory subunit, viral proteins, and cell signaling molecules. Interacts with IER5. Highly expressed in brain.

Functionally, the B regulatory subunit might modulate substrate selectivity and catalytic activity, and might also direct the localization of the catalytic enzyme to a particular subcellular compartment. In Rattus norvegicus (Rat), this protein is Serine/threonine-protein phosphatase 2A 55 kDa regulatory subunit B gamma isoform (Ppp2r2c).